A 296-amino-acid chain; its full sequence is Pseudouridine-5'-phosphate glycosidase (296 aa).

E21 functions as the Proton donor in the catalytic mechanism. Residues K81 and V101 each coordinate substrate. D130 contacts Mn(2+). 132-134 lines the substrate pocket; the sequence is SQD. The active-site Nucleophile is the K151.

Belongs to the pseudouridine-5'-phosphate glycosidase family. As to quaternary structure, homotrimer. Mn(2+) serves as cofactor.

The catalysed reaction is D-ribose 5-phosphate + uracil = psi-UMP + H2O. Catalyzes the reversible cleavage of pseudouridine 5'-phosphate (PsiMP) to ribose 5-phosphate and uracil. Functions biologically in the cleavage direction, as part of a pseudouridine degradation pathway. This is Pseudouridine-5'-phosphate glycosidase from Fervidobacterium nodosum (strain ATCC 35602 / DSM 5306 / Rt17-B1).